The chain runs to 555 residues: Developmental and secondary metabolism regulator veA (555 aa).

Disordered stretches follow at residues 1-23 (MATR…RITR), 39-60 (ERAR…VDPP), and 234-533 (RRRG…TLLS). Basic and acidic residues predominate over residues 13 to 23 (ETEHSVSRITR). Residues 25–228 (GKRITYKLNV…AEQGCRVRIR (204 aa)) form the Velvet domain. The Nuclear localization signal motif lies at 39 to 44 (ERARAC). Residues 239-258 (KRSDDYDFDEERSHRGRIPD) are compositionally biased toward basic and acidic residues. Over residues 311–331 (AIPPAPAPAPPSSSTPTPVAP) the composition is skewed to pro residues. Polar residues-rich tracts occupy residues 336 to 372 (RSSS…TQVY) and 380 to 389 (HARNPSTSTE). The segment at 439-479 (QTPSNAAPSLPPIASISAEYSNNLPQPPSNLAPSPNREPRG) is PEST. Basic and acidic residues-rich tracts occupy residues 492–503 (RPHEDAFSHSER) and 519–533 (ADRR…TLLS).

Belongs to the velvet family. VeA subfamily. As to quaternary structure, component of the heterotrimeric velvet complex composed of laeA, veA and velB; VeA acting as a bridging protein between laeA and velB.

It is found in the nucleus. It localises to the cytoplasm. Component of the velvet transcription factor complex that controls sexual/asexual developmental ratio in response to light, promoting sexual development in the darkness while stimulating asexual sporulation under illumination. The velvet complex hat acts as a global regulator for secondary metabolite gene expression. Increases spore dispersing capacity by impacting conidiophore architecture. The sequence is that of Developmental and secondary metabolism regulator veA from Aspergillus niger (strain ATCC 1015 / CBS 113.46 / FGSC A1144 / LSHB Ac4 / NCTC 3858a / NRRL 328 / USDA 3528.7).